Here is a 275-residue protein sequence, read N- to C-terminus: tRNA (guanine-N(7)-)-methyltransferase (275 aa).

Residues 1–73 (MRHHGRMHAR…GGQQDTWERL (73 aa)) form a disordered region. The span at 46-59 (AHRHRRVTSFRSRR) shows a compositional bias: basic residues. S-adenosyl-L-methionine contacts are provided by glutamate 107, glutamate 132, aspartate 159, and aspartate 182. Residue aspartate 182 is part of the active site. Substrate-binding positions include lysine 186, aspartate 218, and 254–257 (TKYE).

Belongs to the class I-like SAM-binding methyltransferase superfamily. TrmB family.

It catalyses the reaction guanosine(46) in tRNA + S-adenosyl-L-methionine = N(7)-methylguanosine(46) in tRNA + S-adenosyl-L-homocysteine. It participates in tRNA modification; N(7)-methylguanine-tRNA biosynthesis. In terms of biological role, catalyzes the formation of N(7)-methylguanine at position 46 (m7G46) in tRNA. The chain is tRNA (guanine-N(7)-)-methyltransferase from Mycobacterium sp. (strain KMS).